A 102-amino-acid chain; its full sequence is NADH-quinone oxidoreductase subunit K 1 (102 aa).

A run of 3 helical transmembrane segments spans residues 5 to 25, 31 to 51, and 65 to 85; these read LSHYLTVSAILFTLGVFGIFL, IVILMSVELILLAVNINMVAF, and LFILTVAAAEAAIGLAILVVF.

The protein belongs to the complex I subunit 4L family. In terms of assembly, NDH-1 is composed of 14 different subunits. Subunits NuoA, H, J, K, L, M, N constitute the membrane sector of the complex.

It localises to the cell inner membrane. The enzyme catalyses a quinone + NADH + 5 H(+)(in) = a quinol + NAD(+) + 4 H(+)(out). NDH-1 shuttles electrons from NADH, via FMN and iron-sulfur (Fe-S) centers, to quinones in the respiratory chain. The immediate electron acceptor for the enzyme in this species is believed to be ubiquinone. Couples the redox reaction to proton translocation (for every two electrons transferred, four hydrogen ions are translocated across the cytoplasmic membrane), and thus conserves the redox energy in a proton gradient. The sequence is that of NADH-quinone oxidoreductase subunit K 1 from Rhizobium etli (strain ATCC 51251 / DSM 11541 / JCM 21823 / NBRC 15573 / CFN 42).